Reading from the N-terminus, the 208-residue chain is N-(5'-phosphoribosyl)anthranilate isomerase (208 aa).

Belongs to the TrpF family.

It catalyses the reaction N-(5-phospho-beta-D-ribosyl)anthranilate = 1-(2-carboxyphenylamino)-1-deoxy-D-ribulose 5-phosphate. It participates in amino-acid biosynthesis; L-tryptophan biosynthesis; L-tryptophan from chorismate: step 3/5. This chain is N-(5'-phosphoribosyl)anthranilate isomerase, found in Deinococcus radiodurans (strain ATCC 13939 / DSM 20539 / JCM 16871 / CCUG 27074 / LMG 4051 / NBRC 15346 / NCIMB 9279 / VKM B-1422 / R1).